A 135-amino-acid polypeptide reads, in one-letter code: MEQQSDGLKVMVIDDSKTIRRTAETLLKKVGCDVITAIDGFDALAKIADTHPNIIFVDIMMPRLDGYQTCALIKNNSAFKSTPVIMLSSKDGLFDKAKGRIVGSDQYLTKPFSKEELLGAIKAHVPSFTPVDAVS.

The Response regulatory domain occupies 9–125 (KVMVIDDSKT…ELLGAIKAHV (117 aa)). At D58 the chain carries 4-aspartylphosphate.

In terms of processing, phosphorylated.

Plays an essential role in both cAMP-dependent and independent regulation of twitching motility. Regulates the cAMP-independent coordination of type IV pilus (T4P) biogenesis and retraction that plays a role in surface and host cell adhesion, colonization, biofilm maturation, virulence, and twitching. In addition, phosphorylated PilG is necessary for cAMP production via regulation of the adenylate cyclase CyaB. Acts therefore as a response regulator of the chemosensory system/Chp system. This Pseudomonas aeruginosa (strain ATCC 15692 / DSM 22644 / CIP 104116 / JCM 14847 / LMG 12228 / 1C / PRS 101 / PAO1) protein is Protein PilG (pilG).